The primary structure comprises 334 residues: Cathepsin R (334 aa).

Residues 1–17 (MAAVVFIAFLYLGVASG) form the signal peptide. The propeptide at 18–114 (VPVLDSSLDA…SIMKREAGSI (97 aa)) is activation peptide. Disulfide bonds link cysteine 136–cysteine 179 and cysteine 170–cysteine 212. Cysteine 139 is an active-site residue. Asparagine 269 carries N-linked (GlcNAc...) asparagine glycosylation. A disulfide bridge connects residues cysteine 270 and cysteine 323. Residues histidine 277 and asparagine 301 contribute to the active site.

Belongs to the peptidase C1 family. As to expression, placenta.

The protein resides in the lysosome. The chain is Cathepsin R (Ctsr) from Mus musculus (Mouse).